A 2138-amino-acid chain; its full sequence is Conidial yellow pigment biosynthesis polyketide synthase melA (2138 aa).

The interval 8-244 is N-terminal acylcarrier protein transacylase domain (SAT); the sequence is YLFGDQTADF…TRVPIHGPYH (237 aa). Positions 373–804 constitute a Ketosynthase family 3 (KS3) domain; sequence QSKIAIIGLS…GGNTALMVED (432 aa). Residues C545, H680, and H722 each act as for beta-ketoacyl synthase activity in the active site. The interval 910–1229 is malonyl-CoA:ACP transacylase (MAT) domain; sequence FVFTGQGAQY…VSALYMAGIE (320 aa). Catalysis depends on S999, which acts as the For acyl/malonyl transferase activity. Residues 1288–1601 are product template (PT) domain; it reads SSAAQRVLET…RKILDMALPP (314 aa). An N-terminal hotdog fold region spans residues 1292–1423; that stretch reads QRVLETSGDN…CNIKFFDPSP (132 aa). Residues 1292-1596 enclose the PKS/mFAS DH domain; that stretch reads QRVLETSGDN…FQGLARKILD (305 aa). The active-site Proton acceptor; for dehydratase activity is H1324. The C-terminal hotdog fold stretch occupies residues 1451 to 1596; that stretch reads AHRMKRGMVY…FQGLARKILD (146 aa). D1509 serves as the catalytic Proton donor; for dehydratase activity. Residues 1640 to 1714 form the Carrier 1 domain; the sequence is PSMATRALAI…DFKHLLAQMG (75 aa). S1674 carries the post-translational modification O-(pantetheine 4'-phosphoryl)serine. The tract at residues 1712-1758 is disordered; the sequence is QMGPGESSDGSSSEGDMSSAASSTDLSSPNTSGLPTPANEKSMTHGL. The span at 1713 to 1739 shows a compositional bias: low complexity; the sequence is MGPGESSDGSSSEGDMSSAASSTDLSS. Residues 1740-1758 show a composition bias toward polar residues; the sequence is PNTSGLPTPANEKSMTHGL. A Carrier 2 domain is found at 1759–1836; it reads QGQNDSMRQI…DIETTLDLKP (78 aa). S1796 is modified (O-(pantetheine 4'-phosphoryl)serine). The claisen cyclase domain stretch occupies residues 1863–2135; the sequence is TQHPPATSIL…ELARFIANSM (273 aa). S1953 acts as the For Claisen cyclase activity in catalysis.

The enzyme catalyses 6 malonyl-CoA + acetyl-CoA + 6 H(+) = naphtopyrone YWA1 + 6 CO2 + 7 CoA + H2O. Its pathway is pigment biosynthesis. It participates in polyketide biosynthesis; heptaketide naphthopyrone YWA1 biosynthesis. In terms of biological role, non-reducing polyketide synthase involved in the biosynthesis of a yellow conidial pigment. Probably forms the heptaketide naphthopyrene YWA1 via condensation of acetate units. The protein is Conidial yellow pigment biosynthesis polyketide synthase melA of Penicillium expansum (Blue mold rot fungus).